The primary structure comprises 1403 residues: DNA-directed RNA polymerase subunit beta' (1403 aa).

The Zn(2+) site is built by Cys69, Cys71, Cys84, and Cys87. Mg(2+) is bound by residues Asp461, Asp463, and Asp465. Residues Cys818, Cys891, Cys898, and Cys901 each contribute to the Zn(2+) site. Positions 1384-1403 (LELLRNEGEDETGNEELVAE) are disordered. Positions 1391–1403 (GEDETGNEELVAE) are enriched in acidic residues.

The protein belongs to the RNA polymerase beta' chain family. The RNAP catalytic core consists of 2 alpha, 1 beta, 1 beta' and 1 omega subunit. When a sigma factor is associated with the core the holoenzyme is formed, which can initiate transcription. Mg(2+) is required as a cofactor. Zn(2+) serves as cofactor.

The catalysed reaction is RNA(n) + a ribonucleoside 5'-triphosphate = RNA(n+1) + diphosphate. In terms of biological role, DNA-dependent RNA polymerase catalyzes the transcription of DNA into RNA using the four ribonucleoside triphosphates as substrates. The protein is DNA-directed RNA polymerase subunit beta' of Koribacter versatilis (strain Ellin345).